Here is a 150-residue protein sequence, read N- to C-terminus: Ribosome-binding factor A (150 aa).

Residues 131–150 (LSHDDDEDGGADEAPRNGDE) are disordered.

Belongs to the RbfA family. In terms of assembly, monomer. Binds 30S ribosomal subunits, but not 50S ribosomal subunits or 70S ribosomes.

It localises to the cytoplasm. One of several proteins that assist in the late maturation steps of the functional core of the 30S ribosomal subunit. Associates with free 30S ribosomal subunits (but not with 30S subunits that are part of 70S ribosomes or polysomes). Required for efficient processing of 16S rRNA. May interact with the 5'-terminal helix region of 16S rRNA. This is Ribosome-binding factor A from Brucella melitensis biotype 2 (strain ATCC 23457).